Reading from the N-terminus, the 261-residue chain is tRNA pseudouridine synthase A (261 aa).

The Nucleophile role is filled by Asp52. Tyr110 is a substrate binding site.

Belongs to the tRNA pseudouridine synthase TruA family. As to quaternary structure, homodimer.

The catalysed reaction is uridine(38/39/40) in tRNA = pseudouridine(38/39/40) in tRNA. In terms of biological role, formation of pseudouridine at positions 38, 39 and 40 in the anticodon stem and loop of transfer RNAs. The protein is tRNA pseudouridine synthase A of Blochmanniella pennsylvanica (strain BPEN).